A 291-amino-acid chain; its full sequence is Glycine--tRNA ligase alpha subunit (291 aa).

The protein belongs to the class-II aminoacyl-tRNA synthetase family. As to quaternary structure, tetramer of two alpha and two beta subunits.

It is found in the cytoplasm. The catalysed reaction is tRNA(Gly) + glycine + ATP = glycyl-tRNA(Gly) + AMP + diphosphate. This is Glycine--tRNA ligase alpha subunit from Geotalea uraniireducens (strain Rf4) (Geobacter uraniireducens).